The following is a 461-amino-acid chain: D-phenylhydantoinase (461 aa).

A divalent metal cation is bound by residues His59, His61, and Lys151. Lys151 bears the N6-carboxylysine mark. Tyr156 is a binding site for substrate. A divalent metal cation is bound by residues His182 and His239. Residue Ser286 participates in substrate binding. Asp313 serves as a coordination point for a divalent metal cation. Residue Asn335 participates in substrate binding.

Belongs to the metallo-dependent hydrolases superfamily. Hydantoinase/dihydropyrimidinase family. As to quaternary structure, homotetramer. The cofactor is a divalent metal cation. Post-translationally, carboxylation allows a single lysine to coordinate two divalent metal cations.

The enzyme catalyses D-5-phenylhydantoin + H2O = N-carbamoyl-D-phenylglycine + H(+). In terms of biological role, catalyzes the stereospecific hydrolysis of the cyclic amide bond of D-hydantoin derivatives with an aromatic side chains at the 5'-position. Has no activity on dihydropyrimidines. The physiological function is unknown. The sequence is that of D-phenylhydantoinase from Escherichia coli O6:K15:H31 (strain 536 / UPEC).